A 565-amino-acid chain; its full sequence is NAD-dependent malic enzyme (565 aa).

The Proton donor role is filled by Tyr104. Arg157 provides a ligand contact to NAD(+). The active-site Proton acceptor is Lys175. A divalent metal cation is bound by residues Glu246, Asp247, and Asp270. NAD(+)-binding residues include Asp270 and Asn418.

It belongs to the malic enzymes family. In terms of assembly, homotetramer. Mg(2+) serves as cofactor. The cofactor is Mn(2+).

It carries out the reaction (S)-malate + NAD(+) = pyruvate + CO2 + NADH. The enzyme catalyses oxaloacetate + H(+) = pyruvate + CO2. This chain is NAD-dependent malic enzyme, found in Escherichia coli (strain K12 / MC4100 / BW2952).